Reading from the N-terminus, the 632-residue chain is Chaperone protein DnaK (632 aa).

Residue T198 is modified to Phosphothreonine; by autocatalysis. The tract at residues 524–557 is disordered; it reads RREAVDAKNHADSLVHSTEKALAEHGSKIEDSER.

The protein belongs to the heat shock protein 70 family.

Acts as a chaperone. This Nitrobacter hamburgensis (strain DSM 10229 / NCIMB 13809 / X14) protein is Chaperone protein DnaK.